The primary structure comprises 464 residues: ATP synthase subunit beta 2 (464 aa).

153–160 (GGAGVGKT) is a binding site for ATP.

The protein belongs to the ATPase alpha/beta chains family. In terms of assembly, F-type ATPases have 2 components, CF(1) - the catalytic core - and CF(0) - the membrane proton channel. CF(1) has five subunits: alpha(3), beta(3), gamma(1), delta(1), epsilon(1). CF(0) has three main subunits: a(1), b(2) and c(9-12). The alpha and beta chains form an alternating ring which encloses part of the gamma chain. CF(1) is attached to CF(0) by a central stalk formed by the gamma and epsilon chains, while a peripheral stalk is formed by the delta and b chains.

It is found in the cell inner membrane. It carries out the reaction ATP + H2O + 4 H(+)(in) = ADP + phosphate + 5 H(+)(out). Functionally, produces ATP from ADP in the presence of a proton gradient across the membrane. The catalytic sites are hosted primarily by the beta subunits. The chain is ATP synthase subunit beta 2 from Paraburkholderia xenovorans (strain LB400).